We begin with the raw amino-acid sequence, 438 residues long: Chromosomal replication initiator protein DnaA (438 aa).

Positions 1–74 are domain I, interacts with DnaA modulators; sequence MNEINKIWQK…SFYQITGSQV (74 aa). Positions 74–100 are domain II; that stretch reads VEVKYIITGKEHETGLIEEKKQVIKKG. A domain III, AAA+ region region spans residues 101–317; that stretch reads NLNPKYTFDT…GSLIKLCAYT (217 aa). 4 residues coordinate ATP: Gly145, Gly147, Lys148, and Thr149. Residues 318 to 438 form a domain IV, binds dsDNA region; that stretch reads SLTKVPISMD…DSIIKKVTGQ (121 aa).

Belongs to the DnaA family. Oligomerizes as a right-handed, spiral filament on DNA at oriC.

The protein resides in the cytoplasm. Functionally, plays an essential role in the initiation and regulation of chromosomal replication. ATP-DnaA binds to the origin of replication (oriC) to initiate formation of the DNA replication initiation complex once per cell cycle. Binds the DnaA box (a 9 base pair repeat at the origin) and separates the double-stranded (ds)DNA. Forms a right-handed helical filament on oriC DNA; dsDNA binds to the exterior of the filament while single-stranded (ss)DNA is stabiized in the filament's interior. The ATP-DnaA-oriC complex binds and stabilizes one strand of the AT-rich DNA unwinding element (DUE), permitting loading of DNA polymerase. After initiation quickly degrades to an ADP-DnaA complex that is not apt for DNA replication. Binds acidic phospholipids. This Thermodesulfovibrio yellowstonii (strain ATCC 51303 / DSM 11347 / YP87) protein is Chromosomal replication initiator protein DnaA.